Reading from the N-terminus, the 367-residue chain is tRNA-specific 2-thiouridylase MnmA (367 aa).

ATP-binding positions include 24–31 and Leu50; that span reads AMSGGVDS. Cys115 functions as the Nucleophile in the catalytic mechanism. An intrachain disulfide couples Cys115 to Cys211. Gly139 contacts ATP. Residues 161 to 163 form an interaction with tRNA region; it reads KDQ. Residue Cys211 is the Cysteine persulfide intermediate of the active site.

This sequence belongs to the MnmA/TRMU family.

It is found in the cytoplasm. The catalysed reaction is S-sulfanyl-L-cysteinyl-[protein] + uridine(34) in tRNA + AH2 + ATP = 2-thiouridine(34) in tRNA + L-cysteinyl-[protein] + A + AMP + diphosphate + H(+). Its function is as follows. Catalyzes the 2-thiolation of uridine at the wobble position (U34) of tRNA, leading to the formation of s(2)U34. The chain is tRNA-specific 2-thiouridylase MnmA from Ehrlichia canis (strain Jake).